The primary structure comprises 54 residues: ATP synthase F(0) complex subunit 8 (54 aa).

A helical membrane pass occupies residues 9-29 (WFMILFFSWVIFLTIIPTKII). Residues 35 to 54 (NDPTQVDAKEHKNDTWNWPW) are disordered.

The protein belongs to the ATPase protein 8 family. Component of the ATP synthase complex composed at least of ATP5F1A/subunit alpha, ATP5F1B/subunit beta, ATP5MC1/subunit c (homooctomer), MT-ATP6/subunit a, MT-ATP8/subunit 8, ATP5ME/subunit e, ATP5MF/subunit f, ATP5MG/subunit g, ATP5MK/subunit k, ATP5MJ/subunit j, ATP5F1C/subunit gamma, ATP5F1D/subunit delta, ATP5F1E/subunit epsilon, ATP5PF/subunit F6, ATP5PB/subunit b, ATP5PD/subunit d, ATP5PO/subunit OSCP. ATP synthase complex consists of a soluble F(1) head domain (subunits alpha(3) and beta(3)) - the catalytic core - and a membrane F(0) domain - the membrane proton channel (subunits c, a, 8, e, f, g, k and j). These two domains are linked by a central stalk (subunits gamma, delta, and epsilon) rotating inside the F1 region and a stationary peripheral stalk (subunits F6, b, d, and OSCP).

Its subcellular location is the mitochondrion membrane. Its function is as follows. Subunit 8, of the mitochondrial membrane ATP synthase complex (F(1)F(0) ATP synthase or Complex V) that produces ATP from ADP in the presence of a proton gradient across the membrane which is generated by electron transport complexes of the respiratory chain. ATP synthase complex consist of a soluble F(1) head domain - the catalytic core - and a membrane F(1) domain - the membrane proton channel. These two domains are linked by a central stalk rotating inside the F(1) region and a stationary peripheral stalk. During catalysis, ATP synthesis in the catalytic domain of F(1) is coupled via a rotary mechanism of the central stalk subunits to proton translocation. In vivo, can only synthesize ATP although its ATP hydrolase activity can be activated artificially in vitro. Part of the complex F(0) domain. The polypeptide is ATP synthase F(0) complex subunit 8 (Danio rerio (Zebrafish)).